We begin with the raw amino-acid sequence, 490 residues long: Tektin-3 (490 aa).

O-linked (GalNAc...) threonine glycans are attached at residues Thr-7, Thr-9, and Thr-11. 4 N-linked (GlcNAc...) asparagine glycosylation sites follow: Asn-41, Asn-86, Asn-111, and Asn-276. Positions 415–461 form a coiled coil; it reads MAQLRLVNEVYEVDETIQTLQQRLRDSEDTLQSLAHTKATLEHDLAV.

This sequence belongs to the tektin family. Microtubule inner protein component of sperm flagellar doublet microtubules. Interacts with TEKT1, TEKT2, TEKT4 and TEKT5. Interacts with CCDC38. N- and O-glycosylated. In terms of processing, ubiquitinated, leading to its degradation. Deubiquitinated by USP16, promoting its stability. Post-translationally, may be proteolytically processed during the epididymal transit of spermatozoa. In terms of tissue distribution, expressed preferentially in testis. Expressed predominantly in late pachytene spermatocytes and early round spermatids. Expressed in spermatozoa.

The protein resides in the cytoplasm. The protein localises to the cytoskeleton. It is found in the cilium axoneme. It localises to the flagellum axoneme. Its subcellular location is the cytoplasmic vesicle. The protein resides in the secretory vesicle. The protein localises to the acrosome outer membrane. In terms of biological role, microtubule inner protein (MIP) part of the dynein-decorated doublet microtubules (DMTs) in cilia and flagellar axoneme. Forms filamentous polymers in the walls of ciliary and flagellar microtubules. Required for normal sperm mobility. The protein is Tektin-3 (Tekt3) of Mus musculus (Mouse).